We begin with the raw amino-acid sequence, 97 residues long: YcgL domain-containing protein Pfl01_1389 (97 aa).

A YcgL domain is found at 3-87 (RICSIYQSSK…AEEEYIEHLP (85 aa)).

The polypeptide is YcgL domain-containing protein Pfl01_1389 (Pseudomonas fluorescens (strain Pf0-1)).